The sequence spans 439 residues: ATP-dependent protease ATPase subunit HslU (439 aa).

Residues isoleucine 17, 59-64 (GVGKTE), aspartate 251, glutamate 317, and arginine 389 contribute to the ATP site.

This sequence belongs to the ClpX chaperone family. HslU subfamily. In terms of assembly, a double ring-shaped homohexamer of HslV is capped on each side by a ring-shaped HslU homohexamer. The assembly of the HslU/HslV complex is dependent on binding of ATP.

The protein localises to the cytoplasm. Functionally, ATPase subunit of a proteasome-like degradation complex; this subunit has chaperone activity. The binding of ATP and its subsequent hydrolysis by HslU are essential for unfolding of protein substrates subsequently hydrolyzed by HslV. HslU recognizes the N-terminal part of its protein substrates and unfolds these before they are guided to HslV for hydrolysis. This is ATP-dependent protease ATPase subunit HslU from Campylobacter jejuni subsp. doylei (strain ATCC BAA-1458 / RM4099 / 269.97).